A 71-amino-acid chain; its full sequence is Large ribosomal subunit protein bL31 (71 aa).

Positions 16, 18, 36, and 39 each coordinate Zn(2+).

This sequence belongs to the bacterial ribosomal protein bL31 family. Type A subfamily. As to quaternary structure, part of the 50S ribosomal subunit. Requires Zn(2+) as cofactor.

Binds the 23S rRNA. This chain is Large ribosomal subunit protein bL31, found in Thermotoga maritima (strain ATCC 43589 / DSM 3109 / JCM 10099 / NBRC 100826 / MSB8).